Here is a 69-residue protein sequence, read N- to C-terminus: Protein SlyX homolog (69 aa).

This sequence belongs to the SlyX family.

The polypeptide is Protein SlyX homolog (Maricaulis maris (strain MCS10) (Caulobacter maris)).